The following is a 285-amino-acid chain: 2,3,4,5-tetrahydropyridine-2,6-dicarboxylate N-succinyltransferase (285 aa).

Substrate-binding residues include arginine 111 and aspartate 148.

It belongs to the transferase hexapeptide repeat family. As to quaternary structure, homotrimer.

The protein localises to the cytoplasm. It carries out the reaction (S)-2,3,4,5-tetrahydrodipicolinate + succinyl-CoA + H2O = (S)-2-succinylamino-6-oxoheptanedioate + CoA. The protein operates within amino-acid biosynthesis; L-lysine biosynthesis via DAP pathway; LL-2,6-diaminopimelate from (S)-tetrahydrodipicolinate (succinylase route): step 1/3. In Allorhizobium ampelinum (strain ATCC BAA-846 / DSM 112012 / S4) (Agrobacterium vitis (strain S4)), this protein is 2,3,4,5-tetrahydropyridine-2,6-dicarboxylate N-succinyltransferase.